Reading from the N-terminus, the 290-residue chain is 4-diphosphocytidyl-2-C-methyl-D-erythritol kinase (290 aa).

K13 is a catalytic residue. 93-103 (PVQAGLGGGSA) is an ATP binding site. The active site involves D135.

The protein belongs to the GHMP kinase family. IspE subfamily.

It catalyses the reaction 4-CDP-2-C-methyl-D-erythritol + ATP = 4-CDP-2-C-methyl-D-erythritol 2-phosphate + ADP + H(+). Its pathway is isoprenoid biosynthesis; isopentenyl diphosphate biosynthesis via DXP pathway; isopentenyl diphosphate from 1-deoxy-D-xylulose 5-phosphate: step 3/6. Its function is as follows. Catalyzes the phosphorylation of the position 2 hydroxy group of 4-diphosphocytidyl-2C-methyl-D-erythritol. This Desulfitobacterium hafniense (strain Y51) protein is 4-diphosphocytidyl-2-C-methyl-D-erythritol kinase.